A 90-amino-acid polypeptide reads, in one-letter code: Heat shock protein beta-7 (90 aa).

Residues 39 to 90 (PLTFPARPGGQGNIKTLGDAYEFTVDMRDFSPEDIIVTTSNNHIEVRAEKKP) enclose the sHSP domain.

The protein belongs to the small heat shock protein (HSP20) family. Interacts with C-terminal domain of actin-binding protein 280. Found in both cardiac and skeletal muscle.

It localises to the cytoplasm. It is found in the nucleus. The protein resides in the cajal body. The chain is Heat shock protein beta-7 (Hspb7) from Rattus norvegicus (Rat).